A 452-amino-acid chain; its full sequence is Protein disulfide-isomerase TMX3 (452 aa).

A signal peptide spans 1 to 26 (MAAAGLCFILAIVSSTSLLASVPVSA). The Thioredoxin domain maps to 27 to 128 (LVEDLDDSFK…KEDIVEFANR (102 aa)). Topologically, residues 27–375 (LVEDLDDSFK…TVVSVFKSSP (349 aa)) are lumenal. Residues Cys-53 and Cys-56 each act as nucleophile in the active site. An intrachain disulfide couples Cys-53 to Cys-56. Residues Asn-258 and Asn-313 are each glycosylated (N-linked (GlcNAc...) asparagine). The helical transmembrane segment at 376–396 (LLGCFLFGLPLGVISIMCYGI) threads the bilayer. At 397–452 (CTADTEDGSEEMTRKDVIDQNASDEGSDEEEEKGREITDVSDEDQQEKDFMEKKID) the chain is on the cytoplasmic side. Positions 405-452 (SEEMTRKDVIDQNASDEGSDEEEEKGREITDVSDEDQQEKDFMEKKID) are disordered. Residues 443 to 452 (EKDFMEKKID) show a composition bias toward basic and acidic residues. The short motif at 449 to 452 (KKID) is the Di-lysine motif element.

This sequence belongs to the protein disulfide isomerase family.

The protein localises to the endoplasmic reticulum membrane. It carries out the reaction Catalyzes the rearrangement of -S-S- bonds in proteins.. Probable disulfide isomerase, which participates in the folding of proteins containing disulfide bonds. May act as a dithiol oxidase. Acts as a regulator of endoplasmic reticulum-mitochondria contact sites via its ability to regulate redox signals. The polypeptide is Protein disulfide-isomerase TMX3 (tmx3) (Xenopus laevis (African clawed frog)).